The sequence spans 72 residues: Antitoxin VapB11 (72 aa).

Its function is as follows. Antitoxin component of a type II toxin-antitoxin (TA) system. The protein is Antitoxin VapB11 (vapB11) of Mycobacterium tuberculosis (strain CDC 1551 / Oshkosh).